Reading from the N-terminus, the 163-residue chain is Extracellular giant hemoglobin major globin subunit B2 (163 aa).

Residues 1 to 16 (MIALFVLMGLMAAASA) form the signal peptide. Positions 19 to 163 (CCSSEDRANV…RIANGISAGL (145 aa)) constitute a Globin domain. A disulfide bridge connects residues Cys-20 and Cys-151. Hydrogen sulfide is bound at residue Cys-83. His-114 contributes to the heme b binding site.

Belongs to the globin family. The 400 kDa hemoglobin consists of a spherical 24-mer arranged as a double layer of dome-shaped dodecamers. Each dodecamer is composed of the 3-fold trimer of the tetramer A1-A2-B1-B2 having one intra-tetramer (A1-B2) disulfide bond and one inter-tetramer (B1-B2) disulfide bond per tetramer.

The protein localises to the secreted. The extracellular giant hemoglobin is able to bind and transport oxygen and hydrosulfide simultaneously and reversibly at two different sites. This chain is Extracellular giant hemoglobin major globin subunit B2 (ghbB2), found in Oligobrachia mashikoi (Beard worm).